Reading from the N-terminus, the 327-residue chain is Pumilio homolog 18 (327 aa).

In terms of domain architecture, PUM-HD spans 1 to 324 (MAVADNPFSM…NIANILDSFR (324 aa)). Pumilio repeat units follow at residues 79–114 (SDSDYFMSIVTTKFGSRRVQKLLGKSDDVDAFFCAA), 115–149 (ILRRFLHITTDKYASYVTIRAMVVFDKVMKKALYE), 150–185 (RILYHALDLACDQHGCIALNDIITDADDPYYRDQLL), 186–222 (ELVASNALRLSNDASGNFVVQHVLTLYDSRCIHNIAV), 223–260 (NLYGQCIELSFKKYGSYIVEKLLEVEESMVVVVVELLG), and 261–295 (CDGDRLMRLARNEFGNFVVVKALRFTKMSRMDLFW).

It is found in the cytoplasm. Its function is as follows. Sequence-specific RNA-binding protein that regulates translation and mRNA stability by binding the 3'-UTR of target mRNAs. The chain is Pumilio homolog 18 (APUM18) from Arabidopsis thaliana (Mouse-ear cress).